Reading from the N-terminus, the 134-residue chain is UPF0102 protein Dvul_2148 (134 aa).

Belongs to the UPF0102 family.

This Nitratidesulfovibrio vulgaris (strain DP4) (Desulfovibrio vulgaris) protein is UPF0102 protein Dvul_2148.